The following is a 440-amino-acid chain: Cytochrome b (440 aa).

Residues 46-66 (IWGIVLAFCLVLQIATGIVLV) traverse the membrane as a helical segment. Positions 97 and 111 each coordinate heme b. The next 9 membrane-spanning stretches (helical) occupy residues 100 to 120 (GASL…YYGS), 129 to 149 (WIVG…GYVL), 156 to 176 (FWGA…GEAI), 194 to 214 (FFSL…VHIW), 253 to 273 (LFAL…MPNY), 296 to 315 (WYFL…VWVV), 330 to 350 (FFGV…PWLD), 365 to 385 (WWFW…AMPA), and 394 to 414 (LAGS…LGII). Positions 198 and 212 each coordinate heme b.

Belongs to the cytochrome b family. In terms of assembly, the main subunits of complex b-c1 are: cytochrome b, cytochrome c1 and the Rieske protein. Heme b serves as cofactor.

The protein resides in the cell membrane. Component of the ubiquinol-cytochrome c reductase complex (complex III or cytochrome b-c1 complex), which is a respiratory chain that generates an electrochemical potential coupled to ATP synthesis. In Paracoccus denitrificans, this protein is Cytochrome b (petB).